The primary structure comprises 63 residues: Cecropin-C (63 aa).

The signal sequence occupies residues Met1–Ala23. Arginine amide is present on Arg62.

It belongs to the cecropin family.

It localises to the secreted. Its function is as follows. Cecropins have lytic and antibacterial activity against several Gram-positive and Gram-negative bacteria. The sequence is that of Cecropin-C (CecC) from Drosophila orena (Fruit fly).